A 163-amino-acid polypeptide reads, in one-letter code: Nucleotide-binding protein RBAM_011030 (163 aa).

This sequence belongs to the YajQ family.

Functionally, nucleotide-binding protein. The chain is Nucleotide-binding protein RBAM_011030 from Bacillus velezensis (strain DSM 23117 / BGSC 10A6 / LMG 26770 / FZB42) (Bacillus amyloliquefaciens subsp. plantarum).